Consider the following 230-residue polypeptide: 2,3-bisphosphoglycerate-dependent phosphoglycerate mutase (230 aa).

Substrate contacts are provided by residues 8 to 15 (RHGESEWN), 21 to 22 (TG), Arg60, 87 to 90 (ERHY), Lys98, 114 to 115 (RR), and 183 to 184 (GN). Residue His9 is the Tele-phosphohistidine intermediate of the active site. Glu87 functions as the Proton donor/acceptor in the catalytic mechanism.

This sequence belongs to the phosphoglycerate mutase family. BPG-dependent PGAM subfamily.

It carries out the reaction (2R)-2-phosphoglycerate = (2R)-3-phosphoglycerate. Its pathway is carbohydrate degradation; glycolysis; pyruvate from D-glyceraldehyde 3-phosphate: step 3/5. Functionally, catalyzes the interconversion of 2-phosphoglycerate and 3-phosphoglycerate. The protein is 2,3-bisphosphoglycerate-dependent phosphoglycerate mutase of Streptococcus thermophilus (strain CNRZ 1066).